We begin with the raw amino-acid sequence, 560 residues long: Zorya protein ZorC (560 aa).

Component of antiviral defense system Zorya type I, composed of ZorA, ZorB, ZorC and ZorD. Expression of Zorya type I in E.coli (strain MG1655) confers 10,000-fold resistance to phage SECphi27, 100-fold resistance to lambda, and 10-fold resistance to T7. While most T7 infected Zorya-containing cells undergo abortive infection, a minority produce viable phage progeny. These eventually accumulate to a high multiplicity of infection, leading to culture collapse by 2 hours after initial infection. ZorA and ZorB probably assemble in the cell inner membrane and exert their effect there. This is Zorya protein ZorC from Escherichia coli O139:H28 (strain E24377A / ETEC).